The sequence spans 126 residues: Fluoride-specific ion channel FluC (126 aa).

4 helical membrane passes run 2 to 22 (LTFA…GAWL), 37 to 57 (WGTL…VALI), 65 to 85 (AWIR…FSTF), and 101 to 121 (AAAY…LATV). Residues Gly-77 and Thr-80 each coordinate Na(+).

Belongs to the fluoride channel Fluc/FEX (TC 1.A.43) family.

Its subcellular location is the cell inner membrane. It carries out the reaction fluoride(in) = fluoride(out). With respect to regulation, na(+) is not transported, but it plays an essential structural role and its presence is essential for fluoride channel function. Fluoride-specific ion channel. Important for reducing fluoride concentration in the cell, thus reducing its toxicity. This is Fluoride-specific ion channel FluC from Bordetella parapertussis (strain 12822 / ATCC BAA-587 / NCTC 13253).